A 127-amino-acid chain; its full sequence is Aspartate 1-decarboxylase (127 aa).

S25 serves as the catalytic Schiff-base intermediate with substrate; via pyruvic acid. S25 carries the post-translational modification Pyruvic acid (Ser). Residue T57 coordinates substrate. The active-site Proton donor is Y58. 73–75 (GAA) is a substrate binding site.

It belongs to the PanD family. In terms of assembly, heterooctamer of four alpha and four beta subunits. It depends on pyruvate as a cofactor. Post-translationally, is synthesized initially as an inactive proenzyme, which is activated by self-cleavage at a specific serine bond to produce a beta-subunit with a hydroxyl group at its C-terminus and an alpha-subunit with a pyruvoyl group at its N-terminus.

Its subcellular location is the cytoplasm. It catalyses the reaction L-aspartate + H(+) = beta-alanine + CO2. It functions in the pathway cofactor biosynthesis; (R)-pantothenate biosynthesis; beta-alanine from L-aspartate: step 1/1. In terms of biological role, catalyzes the pyruvoyl-dependent decarboxylation of aspartate to produce beta-alanine. The polypeptide is Aspartate 1-decarboxylase (Listeria welshimeri serovar 6b (strain ATCC 35897 / DSM 20650 / CCUG 15529 / CIP 8149 / NCTC 11857 / SLCC 5334 / V8)).